A 94-amino-acid chain; its full sequence is Selenoprotein K (94 aa).

Residues 20-42 (LSFLTDFFWGAVEFIGLFFQTLV) traverse the membrane as a helical segment. A disordered region spans residues 48-94 (KDGNNSASSRFSDGRGPPGFPGRRRMGRINHGAGPTPPPMGGGGUGR). Polar residues predominate over residues 49–58 (DGNNSASSRF). A non-standard amino acid (selenocysteine) is located at residue selenocysteine 92.

It belongs to the selenoprotein K family.

The protein localises to the endoplasmic reticulum membrane. The protein resides in the cell membrane. Its function is as follows. Required for Ca(2+) flux in immune cells and plays a role in T-cell proliferation and in T-cell and neutrophil migration. Involved in endoplasmic reticulum-associated degradation (ERAD) of soluble glycosylated proteins. Required for cell surface expression of CD36 and involved in macrophage uptake of low-density lipoprotein and in foam cell formation. Required for palmitoylation. This chain is Selenoprotein K (selenok), found in Danio rerio (Zebrafish).